Here is a 465-residue protein sequence, read N- to C-terminus: MPYFTRLILFLFCLMVLVESRKPKRKRWTGQVEMPKPSHLYKKNLDVTKIRKGKPQQLLRVDEHDFSMRPAFGGPAIPVGVDVQVESLDSISEVDMDFTMTLYLRHYWKDERLAFSSASNKSMTFDGRLVKKIWVPDVFFVHSKRSFTHDTTTDNIMLRVFPDGHVLYSMRITVTAMCNMDFSHFPLDSQTCSLELESYAYTDEDLMLYWKNGDESLKTDEKISLSQFLIQKFHTTSRLAFYSSTGWYNRLYINFTLRRHIFFFLLQTYFPATLMVMLSWVSFWIDRRAVPARVSLGITTVLTMTTIITGVNASMPRVSYVKAVDIYLWVSFVFVFLSVLEYAAVNYLTTVQERKERKLREKFPCMCGMLHSKTMMLDGSYSESEANSLAGYPRSHILTEEERQDKIVVHLGLSGEANAARKKGLLKGQTGFRIFQNTHAIDKYSRLIFPASYIFFNLIYWSVFS.

The first 20 residues, 1–20 (MPYFTRLILFLFCLMVLVES), serve as a signal peptide directing secretion. Residues 21 to 260 (RKPKRKRWTG…LYINFTLRRH (240 aa)) lie on the Extracellular side of the membrane. Arg-105 provides a ligand contact to 4-aminobutanoate. Asn-120 carries N-linked (GlcNAc...) asparagine glycosylation. Ser-169 is a 4-aminobutanoate binding site. Cysteines 178 and 192 form a disulfide. Glu-197 is a binding site for 4-aminobutanoate. Asn-254 carries an N-linked (GlcNAc...) asparagine glycan. Residues 261-281 (IFFFLLQTYFPATLMVMLSWV) traverse the membrane as a helical segment. Topologically, residues 282-293 (SFWIDRRAVPAR) are cytoplasmic. A helical membrane pass occupies residues 294-314 (VSLGITTVLTMTTIITGVNAS). The Extracellular segment spans residues 315–325 (MPRVSYVKAVD). Residues 326 to 346 (IYLWVSFVFVFLSVLEYAAVN) form a helical membrane-spanning segment. Residues 347-443 (YLTTVQERKE…IFQNTHAIDK (97 aa)) lie on the Cytoplasmic side of the membrane. Residues 444-464 (YSRLIFPASYIFFNLIYWSVF) traverse the membrane as a helical segment. Position 465 (Ser-465) is a topological domain, extracellular.

This sequence belongs to the ligand-gated ion channel (TC 1.A.9) family. Gamma-aminobutyric acid receptor (TC 1.A.9.5) subfamily. GABRR2 sub-subfamily. In terms of assembly, three rho subunits (rho-1/GBRR1, rho-2/GBRR2 and rho-3/GBRR3) coassemble either to form functional homopentamers or heteropentamers. Rho-2 is unable to form a functional homopentamer. Interacts with SQSTM1.

Its subcellular location is the postsynaptic cell membrane. It localises to the cell membrane. The catalysed reaction is chloride(in) = chloride(out). In terms of biological role, rho subunit of the pentameric ligand-gated chloride channels responsible for mediating the effects of gamma-aminobutyric acid (GABA), the major inhibitory neurotransmitter in the brain. Rho-containing GABA-gated chloride channels are a subclass of GABA(A) receptors (GABAARs) entirely composed of rho subunits, where GABA molecules bind at the rho intersubunit interfaces. When activated by GABA, rho-GABAARs selectively allow the flow of chloride anions across the cell membrane down their electrochemical gradient. Rho-2 GABAARs may contribute to the regulation of glial development in the cerebellum by controlling extrasynaptic transmission. Rho-2 GABAARs are also involved in neuronal tonic (extrasynaptic) and phasic (synaptic) transmission in the Purkinje neurons of the cerebellum. Rho-2 GABAARs expressed in retina may play a role in retinal neurotransmission. The protein is Gamma-aminobutyric acid receptor subunit rho-2 of Homo sapiens (Human).